A 65-amino-acid polypeptide reads, in one-letter code: Large ribosomal subunit protein bL35 (65 aa).

The protein belongs to the bacterial ribosomal protein bL35 family.

The sequence is that of Large ribosomal subunit protein bL35 from Agathobacter rectalis (strain ATCC 33656 / DSM 3377 / JCM 17463 / KCTC 5835 / VPI 0990) (Eubacterium rectale).